The following is a 161-amino-acid chain: SsrA-binding protein (161 aa).

It belongs to the SmpB family.

It is found in the cytoplasm. Functionally, required for rescue of stalled ribosomes mediated by trans-translation. Binds to transfer-messenger RNA (tmRNA), required for stable association of tmRNA with ribosomes. tmRNA and SmpB together mimic tRNA shape, replacing the anticodon stem-loop with SmpB. tmRNA is encoded by the ssrA gene; the 2 termini fold to resemble tRNA(Ala) and it encodes a 'tag peptide', a short internal open reading frame. During trans-translation Ala-aminoacylated tmRNA acts like a tRNA, entering the A-site of stalled ribosomes, displacing the stalled mRNA. The ribosome then switches to translate the ORF on the tmRNA; the nascent peptide is terminated with the 'tag peptide' encoded by the tmRNA and targeted for degradation. The ribosome is freed to recommence translation, which seems to be the essential function of trans-translation. The sequence is that of SsrA-binding protein from Vibrio vulnificus (strain YJ016).